A 334-amino-acid chain; its full sequence is Heat-inducible transcription repressor HrcA (334 aa).

The protein belongs to the HrcA family.

Functionally, negative regulator of class I heat shock genes (grpE-dnaK-dnaJ and groELS operons). Prevents heat-shock induction of these operons. The protein is Heat-inducible transcription repressor HrcA of Acidovorax sp. (strain JS42).